Consider the following 227-residue polypeptide: Urease accessory protein UreF (227 aa).

Belongs to the UreF family. In terms of assembly, ureD, UreF and UreG form a complex that acts as a GTP-hydrolysis-dependent molecular chaperone, activating the urease apoprotein by helping to assemble the nickel containing metallocenter of UreC. The UreE protein probably delivers the nickel.

It localises to the cytoplasm. Functionally, required for maturation of urease via the functional incorporation of the urease nickel metallocenter. The polypeptide is Urease accessory protein UreF (Methylobacillus flagellatus (strain ATCC 51484 / DSM 6875 / VKM B-1610 / KT)).